We begin with the raw amino-acid sequence, 335 residues long: MSSEVTVTEHLLLQQQRAPQATGHFTSLFHDLILSAKIISRSVNKAGLLDVLGGTGDINIQGEKVQKLDEFADKVLLYRMERSGVLCAMASEEHAELIKVSAAFPRGDYILIFDPLDGSSNIDVNINVGTIFSILRRKPGKTGDVELDEVLQPGSEQIAAGYFLYGTSTMLVYTAGQGVHGFTLDPSVGEFLLSHTDIKIPDEGFIYSVNEGYWDYWDTPTREAVMYFKQPSSKEKVRSARYVGSLVADFHRTLLYGGVFMYPSDNRKGKMHGKLRYLCEASPLAFVAENAGGAATDGLYRTLDYVPLSLHNRVPLVIGSKKDVEAVANIYAKYK.

Mg(2+)-binding residues include Glu-92, Asp-114, Leu-116, and Asp-117. Residues 117 to 120, Asn-210, Tyr-242, and Lys-274 contribute to the substrate site; that span reads DGSS. Residue Glu-280 coordinates Mg(2+).

This sequence belongs to the FBPase class 1 family. As to quaternary structure, homotetramer. It depends on Mg(2+) as a cofactor.

Its subcellular location is the cytoplasm. The catalysed reaction is beta-D-fructose 1,6-bisphosphate + H2O = beta-D-fructose 6-phosphate + phosphate. The protein operates within carbohydrate biosynthesis; gluconeogenesis. The protein is Fructose-1,6-bisphosphatase class 1 of Lawsonia intracellularis (strain PHE/MN1-00).